The chain runs to 257 residues: Pyridoxal phosphate homeostasis protein (257 aa).

Ser-2 carries the N-acetylserine modification. Lys-49 is modified (N6-(pyridoxal phosphate)lysine).

Belongs to the pyridoxal phosphate-binding protein YggS/PROSC family.

The protein localises to the cytoplasm. It localises to the nucleus. Pyridoxal 5'-phosphate (PLP)-binding protein, which may be involved in intracellular homeostatic regulation of pyridoxal 5'-phosphate (PLP), the active form of vitamin B6. The polypeptide is Pyridoxal phosphate homeostasis protein (Saccharomyces cerevisiae (strain ATCC 204508 / S288c) (Baker's yeast)).